Consider the following 65-residue polypeptide: Large ribosomal subunit protein bL35 (65 aa).

A disordered region spans residues 20-42; sequence GKVRRHHANASHIMTTKTTKRKR.

Belongs to the bacterial ribosomal protein bL35 family.

This Syntrophus aciditrophicus (strain SB) protein is Large ribosomal subunit protein bL35.